Reading from the N-terminus, the 157-residue chain is Large ribosomal subunit protein uL11 (157 aa).

This sequence belongs to the universal ribosomal protein uL11 family. As to quaternary structure, part of the ribosomal stalk of the 50S ribosomal subunit. Interacts with L10 and the large rRNA to form the base of the stalk. L10 forms an elongated spine to which L12 dimers bind in a sequential fashion forming a multimeric L10(L12)X complex.

Its function is as follows. Forms part of the ribosomal stalk which helps the ribosome interact with GTP-bound translation factors. The polypeptide is Large ribosomal subunit protein uL11 (Archaeoglobus fulgidus (strain ATCC 49558 / DSM 4304 / JCM 9628 / NBRC 100126 / VC-16)).